Reading from the N-terminus, the 172-residue chain is Large ribosomal subunit protein bL9 (172 aa).

Belongs to the bacterial ribosomal protein bL9 family.

Binds to the 23S rRNA. In Chlamydia caviae (strain ATCC VR-813 / DSM 19441 / 03DC25 / GPIC) (Chlamydophila caviae), this protein is Large ribosomal subunit protein bL9.